Here is a 427-residue protein sequence, read N- to C-terminus: Glutamate-1-semialdehyde 2,1-aminomutase (427 aa).

Lys-268 is modified (N6-(pyridoxal phosphate)lysine).

Belongs to the class-III pyridoxal-phosphate-dependent aminotransferase family. HemL subfamily. The cofactor is pyridoxal 5'-phosphate.

It is found in the cytoplasm. It carries out the reaction (S)-4-amino-5-oxopentanoate = 5-aminolevulinate. Its pathway is porphyrin-containing compound metabolism; protoporphyrin-IX biosynthesis; 5-aminolevulinate from L-glutamyl-tRNA(Glu): step 2/2. The chain is Glutamate-1-semialdehyde 2,1-aminomutase from Methanococcus maripaludis (strain DSM 14266 / JCM 13030 / NBRC 101832 / S2 / LL).